Reading from the N-terminus, the 400-residue chain is Nicotinate phosphoribosyltransferase (400 aa).

His220 carries the phosphohistidine; by autocatalysis modification.

The protein belongs to the NAPRTase family. Transiently phosphorylated on a His residue during the reaction cycle. Phosphorylation strongly increases the affinity for substrates and increases the rate of nicotinate D-ribonucleotide production. Dephosphorylation regenerates the low-affinity form of the enzyme, leading to product release.

It catalyses the reaction nicotinate + 5-phospho-alpha-D-ribose 1-diphosphate + ATP + H2O = nicotinate beta-D-ribonucleotide + ADP + phosphate + diphosphate. The protein operates within cofactor biosynthesis; NAD(+) biosynthesis; nicotinate D-ribonucleotide from nicotinate: step 1/1. In terms of biological role, catalyzes the synthesis of beta-nicotinate D-ribonucleotide from nicotinate and 5-phospho-D-ribose 1-phosphate at the expense of ATP. The polypeptide is Nicotinate phosphoribosyltransferase (Salmonella choleraesuis (strain SC-B67)).